We begin with the raw amino-acid sequence, 286 residues long: Large ribosomal subunit protein uL4m (286 aa).

A mitochondrion-targeting transit peptide spans 1 to 26 (MTIKRNLVKTLQSIRYQATTATAHAE). The tract at residues 85–132 (RRVGASNPPGRSENGFSRRKLMPQKGSGRARVGDANSPTRHNGGRALA) is disordered.

The protein belongs to the universal ribosomal protein uL4 family. In terms of assembly, component of the mitochondrial large ribosomal subunit (mt-LSU). Mature yeast 74S mitochondrial ribosomes consist of a small (37S) and a large (54S) subunit. The 37S small subunit contains a 15S ribosomal RNA (15S mt-rRNA) and 34 different proteins. The 54S large subunit contains a 21S rRNA (21S mt-rRNA) and 46 different proteins.

The protein localises to the mitochondrion. Its function is as follows. Component of the mitochondrial ribosome (mitoribosome), a dedicated translation machinery responsible for the synthesis of mitochondrial genome-encoded proteins, including at least some of the essential transmembrane subunits of the mitochondrial respiratory chain. The mitoribosomes are attached to the mitochondrial inner membrane and translation products are cotranslationally integrated into the membrane. This Saccharomyces cerevisiae (strain ATCC 204508 / S288c) (Baker's yeast) protein is Large ribosomal subunit protein uL4m (YML6).